A 199-amino-acid chain; its full sequence is Protein extra-macrochaetae (199 aa).

The region spanning 23–75 is the bHLH domain; the sequence is RIQRHPTHRGDGENAEMKMYLSKLKDLVPFMPKNRKLTKLEIIQHVIDYICDL. Residue S106 is modified to Phosphoserine. Residues 127-199 form a disordered region; sequence RLNAEQPAKV…QNAEKDSRQS (73 aa). Residues 161–182 show a composition bias toward low complexity; it reads QQHQQQQQLQLQQQQLQSQQQL.

In terms of assembly, heterodimer with other HLH proteins.

It is found in the nucleus. In terms of biological role, participates in sensory organ patterning by antagonizing the neurogenic activity of the Achaete-scute complex (AS-C). It lacks a basic DNA-binding domain but is able to form heterodimers with other HLH proteins, thereby inhibiting DNA binding. May sequester proneural proteins in complexes inefficient for DNA interaction. EMC also affects vein differentiation. Inhibits the activity of AS-C proteins by forming an non-DNA binding heterodimer. The sequence is that of Protein extra-macrochaetae (emc) from Drosophila melanogaster (Fruit fly).